Here is a 246-residue protein sequence, read N- to C-terminus: Ribonuclease 3 (246 aa).

One can recognise an RNase III domain in the interval 18–147 (FQELQKKIGI…FIGALYLDQG (130 aa)). A Mg(2+)-binding site is contributed by Glu60. Residue Asp64 is part of the active site. The Mg(2+) site is built by Asp133 and Glu136. Residue Glu136 is part of the active site. Residues 173–242 (DFKSQLQELV…AQMALETLRA (70 aa)) enclose the DRBM domain.

It belongs to the ribonuclease III family. Homodimer. The cofactor is Mg(2+).

It localises to the cytoplasm. The enzyme catalyses Endonucleolytic cleavage to 5'-phosphomonoester.. Functionally, digests double-stranded RNA. Involved in the processing of primary rRNA transcript to yield the immediate precursors to the large and small rRNAs (23S and 16S). Processes some mRNAs, and tRNAs when they are encoded in the rRNA operon. Processes pre-crRNA and tracrRNA of type II CRISPR loci if present in the organism. The sequence is that of Ribonuclease 3 from Geobacillus thermodenitrificans (strain NG80-2).